Consider the following 249-residue polypeptide: Probable transcriptional regulatory protein ACIAD2052 (249 aa).

It belongs to the TACO1 family.

It localises to the cytoplasm. The polypeptide is Probable transcriptional regulatory protein ACIAD2052 (Acinetobacter baylyi (strain ATCC 33305 / BD413 / ADP1)).